The chain runs to 498 residues: ATP synthase subunit beta, chloroplastic (498 aa).

Position 172–179 (172–179 (GGAGVGKT)) interacts with ATP.

This sequence belongs to the ATPase alpha/beta chains family. In terms of assembly, F-type ATPases have 2 components, CF(1) - the catalytic core - and CF(0) - the membrane proton channel. CF(1) has five subunits: alpha(3), beta(3), gamma(1), delta(1), epsilon(1). CF(0) has four main subunits: a(1), b(1), b'(1) and c(9-12).

The protein resides in the plastid. The protein localises to the chloroplast thylakoid membrane. It carries out the reaction ATP + H2O + 4 H(+)(in) = ADP + phosphate + 5 H(+)(out). Functionally, produces ATP from ADP in the presence of a proton gradient across the membrane. The catalytic sites are hosted primarily by the beta subunits. The polypeptide is ATP synthase subunit beta, chloroplastic (Lemna minor (Common duckweed)).